We begin with the raw amino-acid sequence, 511 residues long: Lariat debranching enzyme (511 aa).

Residues C52, H54, D83, and N128 each contribute to the a divalent metal cation site. The interval 168–198 (SGIYSHGDVEFSHYERPAFAERDVKSAYHVR) is lariat recognition loop. A divalent metal cation contacts are provided by H226, H278, and H280. Residues 473–511 (EDDFIIDRGHGSEEPEAKKSRLEEEKKKKKKKIENLKTL) form a disordered region. Residues 477 to 498 (IIDRGHGSEEPEAKKSRLEEEK) show a composition bias toward basic and acidic residues.

The protein belongs to the lariat debranching enzyme family. Fe(2+) serves as cofactor. Requires Zn(2+) as cofactor. It depends on Mn(2+) as a cofactor.

The protein resides in the nucleus. With respect to regulation, active in presence of diverse metals including Fe(2+), Zn(2+), Mn(2+). Binds two metal cations in two adjacent alpha and beta metal-binding pockets. Cleaves the 2'-5' phosphodiester linkage at the branch point of lariat intron pre-mRNAs after splicing and converts them into linear molecules that are subsequently degraded. It thereby facilitates ribonucleotide turnover. In Caenorhabditis briggsae, this protein is Lariat debranching enzyme (dbr-1).